The chain runs to 449 residues: Streptomycin-6-phosphate phosphatase (449 aa).

The N-terminal stretch at 1 to 32 (MRFAYGRLPWRRGAVLGSALLVLVTAPAASTA) is a signal peptide. Asp50 lines the Mg(2+) pocket. Asp50 provides a ligand contact to Zn(2+). The active-site Phosphoserine intermediate is the Ser99. 2 residues coordinate Mg(2+): Asp151 and Thr153. Positions 268–290 (APGGTAPQRCATRNPGRPAGTPD) are disordered. Residue Glu321 participates in Mg(2+) binding. Zn(2+) contacts are provided by Asp326, His330, Asp368, His369, and His412.

Belongs to the alkaline phosphatase family. Requires Mg(2+) as cofactor. Zn(2+) serves as cofactor.

It is found in the secreted. The enzyme catalyses streptomycin 6-phosphate + H2O = streptomycin + phosphate. It participates in antibiotic biosynthesis; streptomycin biosynthesis. Functionally, specifically cleaves both streptomycin-6-phosphate and, more slowly, streptomycin-3''-phosphate during the biosynthesis of streptomycin. This chain is Streptomycin-6-phosphate phosphatase (strK), found in Streptomyces griseus.